We begin with the raw amino-acid sequence, 297 residues long: CCAAT/enhancer-binding protein beta (297 aa).

Residues 1–22 (MHRLLAWDAACLPPPPAAFRPM) form a required for Lys-134 sumoylation region. Position 3 is an asymmetric dimethylarginine; by CARM1 (R3). The interval 22–105 (MEVANFYYEP…YGAKPSKKPS (84 aa)) is required for MYC transcriptional repression. The residue at position 39 (K39) is an N6-acetyllysine; alternate. K39 carries the post-translational modification N6-methylated lysine; alternate. N6-acetyllysine; by KAT2A and KAT2B occurs at positions 99 and 102. An N6-acetyllysine; by KAT2A and KAT2B; alternate modification is found at K103. Residue K103 forms a Glycyl lysine isopeptide (Lys-Gly) (interchain with G-Cter in SUMO2); alternate linkage. S105 bears the Phosphoserine; by RPS6KA1 and PKC/PRKCA mark. K134 is covalently cross-linked (Glycyl lysine isopeptide (Lys-Gly) (interchain with G-Cter in SUMO2); alternate). Residue K134 forms a Glycyl lysine isopeptide (Lys-Gly) (interchain with G-Cter in SUMO); alternate linkage. A Glycyl lysine isopeptide (Lys-Gly) (interchain with G-Cter in SUMO2) cross-link involves residue K145. Residues 172–201 (SGSSGSLSTSSSSSPPGTPSPADAKAAPAA) are disordered. Phosphothreonine; by GSK3-beta is present on T180. O-linked (GlcNAc) serine glycans are attached at residues S181 and S182. The residue at position 185 (S185) is a Phosphoserine; by GSK3-beta. T189 bears the Phosphothreonine; by RPS6KA1, CDK2 and MAPK mark. Residues K212 and K214 each participate in a glycyl lysine isopeptide (Lys-Gly) (interchain with G-Cter in SUMO2) cross-link. In terms of domain architecture, bZIP spans 223–286 (SDEYKMRRER…STLRNLFKQL (64 aa)). The tract at residues 227 to 247 (KMRRERNNIAVRKSRDKAKMR) is basic motif. The residue at position 240 (S240) is a Phosphoserine; by PKC/PRKCA. The segment at 249–256 (LETQHKVL) is leucine-zipper. S277 is subject to Phosphoserine; by CaMK2. A Glycyl lysine isopeptide (Lys-Gly) (interchain with G-Cter in SUMO2) cross-link involves residue K284.

It belongs to the bZIP family. C/EBP subfamily. As to quaternary structure, binds DNA as a homodimer and as a heterodimer. Interacts with MYB; within the complex, MYB and CEBPB bind to different promoter regions. Interacts with ATF4. Binds DNA as a heterodimer with ATF4. Can form stable heterodimers with CEBPA, CEBPD, CEBPE and CEBPG. Interacts with SIX1. Isoform 2 and isoform 3 also form heterodimers. Interacts with TRIM28 and PTGES2. Interacts with PRDM16. Interacts with CCDC85B. Forms a complex with THOC5. Interacts with ZNF638; this interaction increases transcriptional activation. Interacts with CIDEA and CIDEC; these interactions increase transcriptional activation of a subset of CEBPB downstream target genes. Interacts with DDIT3/CHOP. Interacts with EP300; recruits EP300 to chromatin. Interacts with RORA; the interaction disrupts interaction with EP300. Interacts (not methylated) with MED23, MED26, SMARCA2, SMARCB1 and SMARCC1. Interacts with KAT2A and KAT2B. Interacts with ATF5; EP300 is required for ATF5 and CEBPB interaction and DNA binding. Interacts with NFE2L1; the heterodimer represses expression of DSPP during odontoblast differentiation. In terms of processing, phosphorylated at Thr-189 by MAPK and CDK2, serves to prime phosphorylation at Thr-180 and Ser-185 by GSK3B and acquire DNA-binding as well as transactivation activities, required to induce adipogenesis. MAPK and CDK2 act sequentially to maintain Thr-189 in the primed phosphorylated state during mitotical cloning expansion and thereby progression of terminal differentiation. Phosphorylation at Ser-105 enhances transactivation activity. Phosphorylation at Ser-277 in response to calcium increases transactivation activity. Phosphorylated at Thr-189 by RPS6KA1. Methylated. Methylation at Arg-3 by CARM1 and at Lys-39 by EHMT2 inhibit transactivation activity. Methylation is probably inhibited by phosphorylation at Thr-189. Post-translationally, sumoylated by polymeric chains of SUMO2 or SUMO3. Sumoylation at Lys-134 is required for inhibition of T-cells proliferation. In adipocytes, sumoylation at Lys-134 by PIAS1 leads to ubiquitination and subsequent proteasomal degradation. Desumoylated by SENP2, which abolishes ubiquitination and stabilizes protein levels. In terms of processing, ubiquitinated, leading to proteasomal degradation. O-glycosylated, glycosylation at Ser-181 and Ser-182 prevents phosphorylation on Thr-189, Ser-185 and Thr-180 and DNA binding activity which delays the adipocyte differentiation program. Post-translationally, acetylated. Acetylation at Lys-39 is an important and dynamic regulatory event that contributes to its ability to transactivate target genes, including those associated with adipogenesis and adipocyte function. Deacetylation by HDAC1 represses its transactivation activity. Acetylated by KAT2A and KAT2B within a cluster of lysine residues between amino acids 99-103, this acetylation is strongly induced by glucocorticoid treatment and enhances transactivation activity. As to expression, liver and lung.

It localises to the nucleus. Its subcellular location is the cytoplasm. Its function is as follows. Important transcription factor regulating the expression of genes involved in immune and inflammatory responses. Also plays a significant role in adipogenesis, as well as in the gluconeogenic pathway, liver regeneration, and hematopoiesis. The consensus recognition site is 5'-T[TG]NNGNAA[TG]-3'. Its functional capacity is governed by protein interactions and post-translational protein modifications. During early embryogenesis, plays essential and redundant roles with CEBPA. Has a promitotic effect on many cell types such as hepatocytes and adipocytes but has an antiproliferative effect on T-cells by repressing MYC expression, facilitating differentiation along the T-helper 2 lineage. Binds to regulatory regions of several acute-phase and cytokines genes and plays a role in the regulation of acute-phase reaction and inflammation. Also plays a role in intracellular bacteria killing. During adipogenesis, is rapidly expressed and, after activation by phosphorylation, induces CEBPA and PPARG, which turn on the series of adipocyte genes that give rise to the adipocyte phenotype. The delayed transactivation of the CEBPA and PPARG genes by CEBPB appears necessary to allow mitotic clonal expansion and thereby progression of terminal differentiation. Essential for female reproduction because of a critical role in ovarian follicle development. Restricts osteoclastogenesis: together with NFE2L1; represses expression of DSPP during odontoblast differentiation. Essential for gene expression induction in activated macrophages. Plays a major role in immune responses such as CD4(+) T-cell response, granuloma formation and endotoxin shock. Not essential for intracellular bacteria killing. In terms of biological role, acts as a dominant negative through heterodimerization with isoform 2. Promotes osteoblast differentiation and osteoclastogenesis. This Rattus norvegicus (Rat) protein is CCAAT/enhancer-binding protein beta.